The primary structure comprises 636 residues: 3-phosphoinositide-dependent protein kinase 1 (636 aa).

2 stretches are compositionally biased toward low complexity: residues 1–20 (MEDL…NNDT) and 27–37 (APTTLNLTPTA). Positions 1–45 (MEDLTPTNTSLDTTTTNNDTTSDREAAPTTLNLTPTASESENSLS) are disordered. Residues 69 to 364 (FMFLQSMGEG…SQELMAHKFF (296 aa)) form the Protein kinase domain. ATP contacts are provided by residues 79-81 (AYS) and lysine 98. The interval 100-149 (LQKSYLNRHQKMDAIIREKNILTYLSQECGGHPFVTQLYTHFHDQARIYF) is PIF-pocket. Residues 152–154 (GLV) and aspartate 158 each bind ATP. The active-site Proton acceptor is the aspartate 197. The ATP site is built by aspartate 201 and aspartate 215. 2 disordered regions span residues 233 to 264 (TDAN…EENT) and 593 to 636 (KKSR…KKSP). Residues 550–631 (DLEKKADEWC…QVSKKLSMQM (82 aa)) adopt a coiled-coil conformation. The span at 597-624 (KEMMREQKALRRKQEKEEKKALKAEQVS) shows a compositional bias: basic and acidic residues.

This sequence belongs to the protein kinase superfamily. AGC Ser/Thr protein kinase family. PDPK1 subfamily. In terms of assembly, interacts directly with sgk-1, akt-1 and akt-2.

Its subcellular location is the cytoplasm. It catalyses the reaction L-seryl-[protein] + ATP = O-phospho-L-seryl-[protein] + ADP + H(+). The catalysed reaction is L-threonyl-[protein] + ATP = O-phospho-L-threonyl-[protein] + ADP + H(+). Involved in the daf-2/insulin receptor-like transduction pathway, which controls longevity and prevents developmental arrest at the dauer stage. Phosphorylates and activates sgk-1, akt-1 and akt-2. The polypeptide is 3-phosphoinositide-dependent protein kinase 1 (Caenorhabditis elegans).